We begin with the raw amino-acid sequence, 484 residues long: Zinc metalloproteinase/disintegrin PMMP-2 (484 aa).

The N-terminal stretch at 1 to 20 (MIQVLLVTICLAVFPYQGSS) is a signal peptide. Positions 21 to 190 (IILESGNVDD…KASQLNLTPL (170 aa)) are excised as a propeptide. The Peptidase M12B domain occupies 197 to 395 (RYVKLAIVVD…YNPQCILNAP (199 aa)). Asn-239 is a glycosylation site (N-linked (GlcNAc...) asparagine). 3 disulfide bridges follow: Cys-308/Cys-390, Cys-352/Cys-374, and Cys-354/Cys-357. His-333 contacts Zn(2+). The active site involves Glu-334. Zn(2+) contacts are provided by His-337 and His-343. The propeptide occupies 396–413 (LRTDTVSTPVSGNEFLEA). The 82-residue stretch at 403–484 (TPVSGNEFLE…ADCPRNGLYG (82 aa)) folds into the Disintegrin domain. Disulfide bonds link Cys-417–Cys-432, Cys-419–Cys-427, Cys-426–Cys-449, Cys-440–Cys-446, Cys-445–Cys-470, and Cys-458–Cys-477. The Cell attachment site signature appears at 462–464 (RGD).

It belongs to the venom metalloproteinase (M12B) family. P-II subfamily. P-IIa sub-subfamily. As to quaternary structure, monomer. Zn(2+) serves as cofactor. As to expression, expressed by the venom gland.

Its subcellular location is the secreted. Impairs hemostasis in the envenomed animal. Its function is as follows. Inhibits platelet aggregation induced by ADP, thrombin, platelet-activating factor and collagen. Acts by inhibiting fibrinogen interaction with platelet receptors GPIIb/GPIIIa (ITGA2B/ITGB3). The protein is Zinc metalloproteinase/disintegrin PMMP-2 of Protobothrops mucrosquamatus (Taiwan habu).